The primary structure comprises 149 residues: Chromophore lyase CpcS/CpeS homolog (149 aa).

It belongs to the CpcS/CpeS biliprotein lyase family.

It is found in the plastid. Its subcellular location is the chloroplast. Functionally, might function to covalently attach a chromophore to Cys residue(s) of phycobiliproteins. In Pyropia yezoensis (Susabi-nori), this protein is Chromophore lyase CpcS/CpeS homolog.